The chain runs to 338 residues: uncharacterized protein (338 aa).

Residues 111–334 (HLGEERVLVP…LELAEKYNLD (224 aa)) enclose the Radical SAM core domain. Positions 129, 133, and 136 each coordinate [4Fe-4S] cluster.

Requires [4Fe-4S] cluster as cofactor.

This is an uncharacterized protein from Methanocaldococcus jannaschii (strain ATCC 43067 / DSM 2661 / JAL-1 / JCM 10045 / NBRC 100440) (Methanococcus jannaschii).